The following is a 518-amino-acid chain: METDEAQDMSQVSGKESPPISDVPDDADEPMPVPEDLSTTTGGQQSVKNERVLAGNIKIETQSDEENGRACEMNGEECAEDLRMLDASGDKMNGSHNGPGSKAMSGVGGIRLPNGKLKCDICGIICIGPNVLMVHNRSHTGERPFQCNQCGASFTQKGNLLRHIKLHSGEKPFKCHLCNYACRRRDALTGHLRTHSVGKPHKCGYCGRSYKQRSSLEEHKERCHNYLQTMSISSNLYSVIKEETNQSEMAEDLCKIGSERSLVLDRLASNVAKRKSSMPQKFVGEKCLSDLPYDATTNYEKENEIMQTHVIDQAINNAISYLGAESLRPLVQTPPVGSEVVPVISPMYQLHKPLGDNQTRSNHTAQDSAVENLLLLSKAKSVSSERDASPSNSCQDSTDTESNNEERSGLIYLTNHIGPHARNGISVKEESRQFDVLRAGTDNSQDAFKVISSNGEQVRVYKCEHCRVLFLDHVMYTIHMGCHGFRDPFECNMCGYHSQDRYEFSSHITRGEHRFHMS.

Residues 1-51 (METDEAQDMSQVSGKESPPISDVPDDADEPMPVPEDLSTTTGGQQSVKNER) are disordered. The segment covering 37–47 (LSTTTGGQQSV) has biased composition (polar residues). 4 C2H2-type zinc fingers span residues 117 to 139 (LKCD…NRSH), 145 to 167 (FQCN…IKLH), 173 to 195 (FKCH…LRTH), and 201 to 224 (HKCG…ERCH). The interval 381–405 (SVSSERDASPSNSCQDSTDTESNNE) is disordered. 2 C2H2-type zinc fingers span residues 461 to 483 (YKCE…MGCH) and 489 to 513 (FECN…RGEH).

This sequence belongs to the Ikaros C2H2-type zinc-finger protein family. Expressed in embryonic hematopoietic organs such as the bursa of Fabricius, thymus and spleen. In the adult, expressed in spleen, thymus, bursa and peripheral blood leukocytes.

The protein resides in the nucleus. Functionally, binds and activates the enhancer (delta-A element) of the CD3-delta gene. Functions in the specification and the maturation of the T-lymphocyte. Also interacts with a critical control element in the TDT (terminal deoxynucleotidyltransferase) promoter as well as with the promoters for other genes expressed during early stages of B- and T-cell development. Function is isoform-specific and is modulated by dominant-negative inactive isoforms. The chain is DNA-binding protein Ikaros (IKZF1) from Gallus gallus (Chicken).